Consider the following 128-residue polypeptide: Cytochrome c-type biogenesis protein CcmE (128 aa).

Residues 1–8 lie on the Cytoplasmic side of the membrane; sequence MQKRVRNR. A helical; Signal-anchor for type II membrane protein transmembrane segment spans residues 9–29; sequence LITIIICFCSAFLGISIILYN. Residues 30–128 are Periplasmic-facing; sequence LEKNIVFFLP…KHDENYRPPQ (99 aa). Heme contacts are provided by histidine 120 and tyrosine 124.

The protein belongs to the CcmE/CycJ family.

It is found in the cell inner membrane. Functionally, heme chaperone required for the biogenesis of c-type cytochromes. Transiently binds heme delivered by CcmC and transfers the heme to apo-cytochromes in a process facilitated by CcmF and CcmH. The chain is Cytochrome c-type biogenesis protein CcmE from Rickettsia rickettsii (strain Iowa).